The following is a 660-amino-acid chain: Bifunctional polymyxin resistance protein ArnA (660 aa).

Positions 1-304 (MKAVIFAYHD…TLGLVAGARL (304 aa)) are formyltransferase ArnAFT. His-104 functions as the Proton donor; for formyltransferase activity in the catalytic mechanism. Residues Arg-114 and 136 to 140 (VKRAD) contribute to the (6R)-10-formyltetrahydrofolate site. Residues 314–660 (RRIRVLILGV…RSVDVAERAS (347 aa)) form a dehydrogenase ArnADH region. NAD(+) is bound by residues Asp-347 and 368 to 369 (DI). UDP-alpha-D-glucuronate is bound by residues Ala-393, Tyr-398, and 432–433 (TS). Glu-434 (proton acceptor; for decarboxylase activity) is an active-site residue. UDP-alpha-D-glucuronate is bound by residues Arg-460, Asn-492, 526–535 (KLIDGGQQKR), and Tyr-613. The active-site Proton donor; for decarboxylase activity is the Arg-619.

This sequence in the N-terminal section; belongs to the Fmt family. UDP-L-Ara4N formyltransferase subfamily. In the C-terminal section; belongs to the NAD(P)-dependent epimerase/dehydratase family. UDP-glucuronic acid decarboxylase subfamily. As to quaternary structure, homohexamer, formed by a dimer of trimers.

The catalysed reaction is UDP-alpha-D-glucuronate + NAD(+) = UDP-beta-L-threo-pentopyranos-4-ulose + CO2 + NADH. The enzyme catalyses UDP-4-amino-4-deoxy-beta-L-arabinose + (6R)-10-formyltetrahydrofolate = UDP-4-deoxy-4-formamido-beta-L-arabinose + (6S)-5,6,7,8-tetrahydrofolate + H(+). It functions in the pathway nucleotide-sugar biosynthesis; UDP-4-deoxy-4-formamido-beta-L-arabinose biosynthesis; UDP-4-deoxy-4-formamido-beta-L-arabinose from UDP-alpha-D-glucuronate: step 1/3. Its pathway is nucleotide-sugar biosynthesis; UDP-4-deoxy-4-formamido-beta-L-arabinose biosynthesis; UDP-4-deoxy-4-formamido-beta-L-arabinose from UDP-alpha-D-glucuronate: step 3/3. It participates in bacterial outer membrane biogenesis; lipopolysaccharide biosynthesis. In terms of biological role, bifunctional enzyme that catalyzes the oxidative decarboxylation of UDP-glucuronic acid (UDP-GlcUA) to UDP-4-keto-arabinose (UDP-Ara4O) and the addition of a formyl group to UDP-4-amino-4-deoxy-L-arabinose (UDP-L-Ara4N) to form UDP-L-4-formamido-arabinose (UDP-L-Ara4FN). The modified arabinose is attached to lipid A and is required for resistance to polymyxin and cationic antimicrobial peptides. This Salmonella paratyphi B (strain ATCC BAA-1250 / SPB7) protein is Bifunctional polymyxin resistance protein ArnA.